A 724-amino-acid polypeptide reads, in one-letter code: 4-alpha-glucanotransferase (724 aa).

The protein belongs to the disproportionating enzyme family.

It localises to the cytoplasm. It carries out the reaction Transfers a segment of a (1-&gt;4)-alpha-D-glucan to a new position in an acceptor, which may be glucose or a (1-&gt;4)-alpha-D-glucan.. The polypeptide is 4-alpha-glucanotransferase (malQ) (Mycobacterium bovis (strain ATCC BAA-935 / AF2122/97)).